We begin with the raw amino-acid sequence, 196 residues long: Large ribosomal subunit protein uL5 (196 aa).

Belongs to the universal ribosomal protein uL5 family. As to quaternary structure, part of the 50S ribosomal subunit; part of the 5S rRNA/L5/L18/L25 subcomplex. Contacts the 5S rRNA and the P site tRNA. Forms a bridge to the 30S subunit in the 70S ribosome.

In terms of biological role, this is one of the proteins that bind and probably mediate the attachment of the 5S RNA into the large ribosomal subunit, where it forms part of the central protuberance. In the 70S ribosome it contacts protein S13 of the 30S subunit (bridge B1b), connecting the 2 subunits; this bridge is implicated in subunit movement. Contacts the P site tRNA; the 5S rRNA and some of its associated proteins might help stabilize positioning of ribosome-bound tRNAs. The sequence is that of Large ribosomal subunit protein uL5 from Prosthecochloris aestuarii (strain DSM 271 / SK 413).